We begin with the raw amino-acid sequence, 631 residues long: Putative ATP-dependent DNA helicase Q1 (631 aa).

Residues 118–293 form the Helicase ATP-binding domain; sequence INAVMSKEDA…KDMLGIQAAL (176 aa). Residue 131 to 138 coordinates ATP; that stretch reads LSTGGGKS. Positions 237 to 240 match the DEVH box motif; sequence DEVH. A Helicase C-terminal domain is found at 318 to 466; sequence CTEEIAKTIK…NLYNMVRYAA (149 aa). Positions 471, 489, 493, and 496 each coordinate Zn(2+). Residues 610–631 form a disordered region; that stretch reads ESKSRKRKASSSVEEEDVMVLD. Residues 622 to 631 show a composition bias toward acidic residues; sequence VEEEDVMVLD.

This sequence belongs to the helicase family. RecQ subfamily. Zn(2+) is required as a cofactor.

Its subcellular location is the nucleus. It carries out the reaction Couples ATP hydrolysis with the unwinding of duplex DNA by translocating in the 3'-5' direction.. The enzyme catalyses ATP + H2O = ADP + phosphate + H(+). Its function is as follows. DNA helicase that may play a role in the repair of DNA that is damaged by ultraviolet light or other mutagens. Exhibits a magnesium-dependent ATP-dependent DNA-helicase activity that unwinds single- and double-stranded DNA in a 3'-5' direction. This chain is Putative ATP-dependent DNA helicase Q1, found in Caenorhabditis elegans.